A 285-amino-acid polypeptide reads, in one-letter code: 2-methoxy-6-polyprenyl-1,4-benzoquinol methylase, mitochondrial (285 aa).

The N-terminal 30 residues, 1–30, are a transit peptide targeting the mitochondrion; that stretch reads MKGATNLFKSMRKPTNVGNFRQFSVNQVNS. S-adenosyl-L-methionine contacts are provided by residues Thr-106, Asp-126, 156 to 157, and Ser-173; that span reads NA.

This sequence belongs to the class I-like SAM-binding methyltransferase superfamily. MenG/UbiE family. In terms of assembly, component of a multi-subunit COQ enzyme complex.

Its subcellular location is the mitochondrion inner membrane. It catalyses the reaction a 2-methoxy-6-(all-trans-polyprenyl)benzene-1,4-diol + S-adenosyl-L-methionine = a 5-methoxy-2-methyl-3-(all-trans-polyprenyl)benzene-1,4-diol + S-adenosyl-L-homocysteine + H(+). The protein operates within cofactor biosynthesis; ubiquinone biosynthesis. Its function is as follows. Methyltransferase required for the conversion of 2-polyprenyl-6-methoxy-1,4-benzoquinol (DDMQH2) to 2-polyprenyl-3-methyl-6-methoxy-1,4-benzoquinol (DMQH2). This is 2-methoxy-6-polyprenyl-1,4-benzoquinol methylase, mitochondrial from Caenorhabditis elegans.